A 139-amino-acid chain; its full sequence is Small ribosomal subunit protein uS12m (139 aa).

The segment at 1 to 21 (MLSTLYQNDLKKKRNRRRNRS) is disordered. Basic residues predominate over residues 11–20 (KKKRNRRRNR).

The protein belongs to the universal ribosomal protein uS12 family.

Its subcellular location is the mitochondrion. In terms of biological role, protein S12 is involved in the translation initiation step. This chain is Small ribosomal subunit protein uS12m (RPS12), found in Paramecium tetraurelia.